The sequence spans 133 residues: ATP synthase epsilon chain (133 aa).

It belongs to the ATPase epsilon chain family. F-type ATPases have 2 components, CF(1) - the catalytic core - and CF(0) - the membrane proton channel. CF(1) has five subunits: alpha(3), beta(3), gamma(1), delta(1), epsilon(1). CF(0) has three main subunits: a, b and c.

The protein resides in the cellular thylakoid membrane. Its function is as follows. Produces ATP from ADP in the presence of a proton gradient across the membrane. The polypeptide is ATP synthase epsilon chain (Prochlorococcus marinus (strain MIT 9303)).